The primary structure comprises 509 residues: AAA ATPase forming ring-shaped complexes (509 aa).

Residues 11 to 50 (AHLQRTISNLSARNAKLAELLKASRDKLSILQDQLEDLAA) are a coiled coil. 236-241 (GCGKTL) is a binding site for ATP.

The protein belongs to the AAA ATPase family. Homohexamer. Assembles into a hexameric ring structure.

In Corynebacterium diphtheriae (strain ATCC 700971 / NCTC 13129 / Biotype gravis), this protein is AAA ATPase forming ring-shaped complexes.